Here is a 466-residue protein sequence, read N- to C-terminus: Collagenase 3 (466 aa).

The first 13 residues, 1–13 (ATFFLLSWTHCWS), serve as a signal peptide directing secretion. A propeptide spans 14–98 (LPLPYGDDDD…PRCGVPDVGV (85 aa)) (activation peptide). Positions 89 to 96 (PRCGVPDV) match the Cysteine switch motif. Cys91 provides a ligand contact to Zn(2+). An N-linked (GlcNAc...) asparagine glycan is attached at Asn112. A Ca(2+)-binding site is contributed by Asp123. An N-linked (GlcNAc...) asparagine glycan is attached at Asn147. Position 157 (Asp157) interacts with Ca(2+). Residues His167 and Asp169 each coordinate Zn(2+). The interaction with TIMP2 stretch occupies residues 171–241 (YPFDGPSGLL…GALMFPIYTY (71 aa)). The Ca(2+) site is built by Asp174, Gly175, Ser177, and Leu179. Residue His182 participates in Zn(2+) binding. Ca(2+) contacts are provided by Asn189, Gly191, and Asp193. A Zn(2+)-binding site is contributed by His195. The Ca(2+) site is built by Asp197, Asp198, and Glu200. His217 lines the Zn(2+) pocket. Residue Glu218 is part of the active site. Zn(2+) contacts are provided by His221, His227, and Met235. The segment at 258–279 (QSLYGPGDEDPNPKHPKTPEKC) is disordered. Residues 263–466 (PGDEDPNPKH…VMPTNSLLWC (204 aa)) form an interaction with collagen region. A compositionally biased stretch (basic and acidic residues) spans 268-279 (PNPKHPKTPEKC). 4 Hemopexin repeats span residues 276-325 (PEKC…WPEL), 326-372 (PNHV…GFPK), 374-422 (VKRL…FPGI), and 423-466 (GDKV…LLWC). A disulfide bridge connects residues Cys279 and Cys466. Residues Asp286, Ile288, Asp330, and Ala332 each coordinate Ca(2+). Position 361 is a phosphotyrosine; by PKDCC (Tyr361). Ca(2+) contacts are provided by Ser378 and Ala380. A glycan (N-linked (GlcNAc...) asparagine) is linked at Asn404. Ca(2+) contacts are provided by Asp427 and Val429.

This sequence belongs to the peptidase M10A family. It depends on Ca(2+) as a cofactor. Requires Zn(2+) as cofactor. The proenzyme is activated by removal of the propeptide; this cleavage can be effected by other matrix metalloproteinases, such as MMP2, MMP3 and MMP14 and may involve several cleavage steps. Cleavage can also be autocatalytic, after partial maturation by another protease or after treatment with 4-aminophenylmercuric acetate (APMA) (in vitro). Post-translationally, N-glycosylated. In terms of processing, tyrosine phosphorylated by PKDCC/VLK.

It localises to the secreted. It is found in the extracellular space. The protein localises to the extracellular matrix. Functionally, plays a role in the degradation of extracellular matrix proteins including fibrillar collagen, fibronectin, TNC and ACAN. Cleaves triple helical collagens, including type I, type II and type III collagen, but has the highest activity with soluble type II collagen. Can also degrade collagen type IV, type XIV and type X. May also function by activating or degrading key regulatory proteins, such as TGFB1 and CCN2. Plays a role in wound healing, tissue remodeling, cartilage degradation, bone development, bone mineralization and ossification. Required for normal embryonic bone development and ossification. Plays a role in the healing of bone fractures via endochondral ossification. Plays a role in wound healing, probably by a mechanism that involves proteolytic activation of TGFB1 and degradation of CCN2. Plays a role in keratinocyte migration during wound healing. May play a role in cell migration and in tumor cell invasion. The protein is Collagenase 3 (Mmp13) of Rattus norvegicus (Rat).